We begin with the raw amino-acid sequence, 294 residues long: Elongation factor Ts (294 aa).

An involved in Mg(2+) ion dislocation from EF-Tu region spans residues 79 to 82 (TDFV).

This sequence belongs to the EF-Ts family.

The protein localises to the cytoplasm. Its function is as follows. Associates with the EF-Tu.GDP complex and induces the exchange of GDP to GTP. It remains bound to the aminoacyl-tRNA.EF-Tu.GTP complex up to the GTP hydrolysis stage on the ribosome. This chain is Elongation factor Ts, found in Geobacillus sp. (strain WCH70).